Here is a 294-residue protein sequence, read N- to C-terminus: 33 kDa chaperonin (294 aa).

Intrachain disulfides connect cysteine 238–cysteine 240 and cysteine 271–cysteine 274.

Belongs to the HSP33 family. In terms of processing, under oxidizing conditions two disulfide bonds are formed involving the reactive cysteines. Under reducing conditions zinc is bound to the reactive cysteines and the protein is inactive.

It localises to the cytoplasm. Its function is as follows. Redox regulated molecular chaperone. Protects both thermally unfolding and oxidatively damaged proteins from irreversible aggregation. Plays an important role in the bacterial defense system toward oxidative stress. The sequence is that of 33 kDa chaperonin from Caldanaerobacter subterraneus subsp. tengcongensis (strain DSM 15242 / JCM 11007 / NBRC 100824 / MB4) (Thermoanaerobacter tengcongensis).